A 106-amino-acid chain; its full sequence is uncharacterized protein (106 aa).

Positions Arg-54–Lys-106 are disordered. A compositionally biased stretch (low complexity) spans Ser-84–Ser-94.

This is an uncharacterized protein from Human adenovirus C serotype 2 (HAdV-2).